The chain runs to 219 residues: Orotate phosphoribosyltransferase (219 aa).

Lys-26 contributes to the 5-phospho-alpha-D-ribose 1-diphosphate binding site. 34–35 (FF) provides a ligand contact to orotate. Residues 72-73 (YK), Arg-98, Lys-99, Lys-102, His-104, and 124-132 (DDVITAGTA) each bind 5-phospho-alpha-D-ribose 1-diphosphate. Orotate-binding residues include Thr-128 and Arg-156.

This sequence belongs to the purine/pyrimidine phosphoribosyltransferase family. PyrE subfamily. Homodimer. Requires Mg(2+) as cofactor.

It catalyses the reaction orotidine 5'-phosphate + diphosphate = orotate + 5-phospho-alpha-D-ribose 1-diphosphate. It functions in the pathway pyrimidine metabolism; UMP biosynthesis via de novo pathway; UMP from orotate: step 1/2. Its function is as follows. Catalyzes the transfer of a ribosyl phosphate group from 5-phosphoribose 1-diphosphate to orotate, leading to the formation of orotidine monophosphate (OMP). The polypeptide is Orotate phosphoribosyltransferase (Xylella fastidiosa (strain Temecula1 / ATCC 700964)).